A 223-amino-acid polypeptide reads, in one-letter code: RNA-free ribonuclease P (223 aa).

The protein belongs to the HARP family.

The enzyme catalyses Endonucleolytic cleavage of RNA, removing 5'-extranucleotides from tRNA precursor.. Functionally, RNA-free RNase P that catalyzes the removal of the 5'-leader sequence from pre-tRNA to produce the mature 5'-terminus. The polypeptide is RNA-free ribonuclease P (Methanococcus maripaludis (strain C7 / ATCC BAA-1331)).